Consider the following 63-residue polypeptide: DNA-directed RNA polymerase 7 kDa subunit (63 aa).

Belongs to the poxviridae DNA-directed RNA polymerase 7 kDa subunit family. The DNA-dependent RNA polymerase used for intermediate and late genes expression consists of eight subunits 147 kDa, 133 kDa, 35 kDa, 30 kDa, 22 kDa, 19 kDa, 18 kDa and 7 kDa totalling more than 500 kDa in mass. The same holoenzyme, with the addition of the transcription-specificity factor RAP94, is used for early gene expression.

It localises to the virion. It catalyses the reaction RNA(n) + a ribonucleoside 5'-triphosphate = RNA(n+1) + diphosphate. Functionally, part of the DNA-dependent RNA polymerase which catalyzes the transcription of viral DNA into RNA using the four ribonucleoside triphosphates as substrates. Responsible for the transcription of early, intermediate and late genes. DNA-dependent RNA polymerase associates with the early transcription factor (ETF) thereby allowing the early genes transcription. Late transcription, and probably also intermediate transcription, require newly synthesized RNA polymerase. The sequence is that of DNA-directed RNA polymerase 7 kDa subunit (RPO7) from Myxoma virus (strain Lausanne) (MYXV).